We begin with the raw amino-acid sequence, 496 residues long: Probable CtpA-like serine protease (496 aa).

A compositionally biased stretch (basic and acidic residues) spans 1–16 (MDDKQHTSSSDDERAE). Positions 1 to 27 (MDDKQHTSSSDDERAEIATSNQDQETN) are disordered. Polar residues predominate over residues 18–27 (ATSNQDQETN). Residues 39-59 (FISILIGTILITAVITVVAYI) traverse the membrane as a helical segment. Residues 124–206 (TKSFNEGVSG…TEVTLTVQRG (83 aa)) form the PDZ domain. Catalysis depends on charge relay system residues Ser329, Asp340, and Lys354.

The protein belongs to the peptidase S41A family.

Its subcellular location is the cell membrane. The protein is Probable CtpA-like serine protease of Staphylococcus aureus (strain MSSA476).